The following is a 122-amino-acid chain: uncharacterized protein (122 aa).

Positions 46–116 (KDLQKEVDDL…HQLENKRELN (71 aa)) form a coiled coil.

This is an uncharacterized protein from Invertebrate iridescent virus 6 (IIV-6).